Reading from the N-terminus, the 312-residue chain is Tyrosine recombinase XerC (312 aa).

The Core-binding (CB) domain maps to 1 to 103; it reads MISAFYAFLD…AIKSFSQYCI (103 aa). A Tyr recombinase domain is found at 124 to 306; sequence ELPSPITYEQ…SMKLKKQTHE (183 aa). Residues Arg-164, Lys-188, His-258, Arg-261, and His-284 contribute to the active site. Residue Tyr-293 is the O-(3'-phospho-DNA)-tyrosine intermediate of the active site.

This sequence belongs to the 'phage' integrase family. XerC subfamily. As to quaternary structure, forms a cyclic heterotetrameric complex composed of two molecules of XerC and two molecules of XerD.

It localises to the cytoplasm. In terms of biological role, site-specific tyrosine recombinase, which acts by catalyzing the cutting and rejoining of the recombining DNA molecules. The XerC-XerD complex is essential to convert dimers of the bacterial chromosome into monomers to permit their segregation at cell division. It also contributes to the segregational stability of plasmids. The polypeptide is Tyrosine recombinase XerC (Chlamydia caviae (strain ATCC VR-813 / DSM 19441 / 03DC25 / GPIC) (Chlamydophila caviae)).